The chain runs to 201 residues: Lipopolysaccharide core heptose(II)-phosphate phosphatase (201 aa).

An N-terminal signal peptide occupies residues 1-35 (MLAFTLRFIKNKRYLATLAGALVIIAGLTSQHAWS).

It belongs to the phosphoglycerate mutase family. Ais subfamily.

Its subcellular location is the periplasm. It functions in the pathway bacterial outer membrane biogenesis; lipopolysaccharide metabolism. Catalyzes the dephosphorylation of heptose(II) of the outer membrane lipopolysaccharide core. The protein is Lipopolysaccharide core heptose(II)-phosphate phosphatase of Salmonella schwarzengrund (strain CVM19633).